Reading from the N-terminus, the 299-residue chain is Peroxisomal biogenesis factor 19 (299 aa).

The tract at residues 1–63 (MAAAEEDYGV…SPGDTAKDSL (63 aa)) is disordered. Residue A2 is modified to N-acetylalanine. The segment at 2–56 (AAAEEDYGVGAEADRELEELLESALDDFDKAKPSPAPPSTTTAPDASGPQKRSPG) is docking to the peroxisome membrane and binding to PEX3. The necessary for PEX19 function on peroxisome biogenesis stretch occupies residues 2–91 (AAAEEDYGVG…QATAEFEKAM (90 aa)). Residues 16 to 27 (RELEELLESALD) show a composition bias toward acidic residues. Residues S35, S54, and S66 each carry the phosphoserine modification. T236 carries the phosphothreonine modification. Cysteine methyl ester is present on C296. Residue C296 is the site of S-farnesyl cysteine attachment. Residues 297 to 299 (LIM) constitute a propeptide, removed in mature form.

This sequence belongs to the peroxin-19 family. As to quaternary structure, interacts with a broad range of peroxisomal membrane proteins, including PEX3, PEX10, PEX11A, PEX11B, PEX12, PEX13, PEX14 and PEX16, PXMP2/PMP22, PXMP4/PMP24, SLC25A17/PMP34, ABCD1/ALDP, ABCD2/ALDRP, and ABCD3/PMP70. Also interacts with the tumor suppressor CDKN2A/p19ARF.

It is found in the cytoplasm. The protein localises to the peroxisome membrane. In terms of biological role, necessary for early peroxisomal biogenesis. Acts both as a cytosolic chaperone and as an import receptor for peroxisomal membrane proteins (PMPs). Binds and stabilizes newly synthesized PMPs in the cytoplasm by interacting with their hydrophobic membrane-spanning domains, and targets them to the peroxisome membrane by binding to the integral membrane protein PEX3. Excludes CDKN2A from the nucleus and prevents its interaction with MDM2, which results in active degradation of TP53. This is Peroxisomal biogenesis factor 19 (PEX19) from Pongo abelii (Sumatran orangutan).